We begin with the raw amino-acid sequence, 310 residues long: Porphobilinogen deaminase (310 aa).

Position 242 is an S-(dipyrrolylmethanemethyl)cysteine (C242).

This sequence belongs to the HMBS family. Monomer. Dipyrromethane is required as a cofactor.

It carries out the reaction 4 porphobilinogen + H2O = hydroxymethylbilane + 4 NH4(+). It participates in porphyrin-containing compound metabolism; protoporphyrin-IX biosynthesis; coproporphyrinogen-III from 5-aminolevulinate: step 2/4. Functionally, tetrapolymerization of the monopyrrole PBG into the hydroxymethylbilane pre-uroporphyrinogen in several discrete steps. This is Porphobilinogen deaminase from Shewanella halifaxensis (strain HAW-EB4).